Reading from the N-terminus, the 115-residue chain is MGDNNRATFSNDPAANAPDAAAVEKGKGKAVEEPALEMSMDEDEESEESEAEEIEDDEDDHDNLEPISQSNIIAGGRRTRGKTIDFQEAAEKLKDEMDEDDDDEDFEPNDNDMRN.

Residues 1–10 show a composition bias toward polar residues; it reads MGDNNRATFS. Positions 1 to 115 are disordered; it reads MGDNNRATFS…FEPNDNDMRN (115 aa). Residues 11–21 are compositionally biased toward low complexity; sequence NDPAANAPDAA. A compositionally biased stretch (basic and acidic residues) spans 22–32; it reads AVEKGKGKAVE. The segment covering 39-62 has biased composition (acidic residues); it reads SMDEDEESEESEAEEIEDDEDDHD. Positions 82-95 are enriched in basic and acidic residues; the sequence is KTIDFQEAAEKLKD. Over residues 96–115 the composition is skewed to acidic residues; sequence EMDEDDDDEDFEPNDNDMRN.

The protein belongs to the CHZ1 family. In terms of assembly, forms a heterotrimer with H2A.Z-H2B, stabilizing the association of the histone dimer. Also, with a lower affinity, forms a heterotrimer with H2A-H2B.

Its subcellular location is the nucleus. In terms of biological role, forms a chaperone-bound H2A.Z-H2B complex that acts as a source for SWR1 complex-dependent H2A to H2A.Z histone replacement in chromatin. The protein is Histone H2A.Z-specific chaperone chz1 (chz1) of Aspergillus clavatus (strain ATCC 1007 / CBS 513.65 / DSM 816 / NCTC 3887 / NRRL 1 / QM 1276 / 107).